The chain runs to 331 residues: Putative serine/threonine-protein kinase ZK507.1 (331 aa).

One can recognise a Protein kinase domain in the interval 1–270; that stretch reads MKVNEEGFAI…CKLTLKEPLV (270 aa). Catalysis depends on Asp116, which acts as the Proton acceptor. The span at 302–314 shows a compositional bias: basic and acidic residues; sequence SDRNEENSLDRSK. The disordered stretch occupies residues 302–331; it reads SDRNEENSLDRSKTGTLSFNNSKNKKPSRY.

It belongs to the protein kinase superfamily. Ser/Thr protein kinase family.

It catalyses the reaction L-seryl-[protein] + ATP = O-phospho-L-seryl-[protein] + ADP + H(+). The catalysed reaction is L-threonyl-[protein] + ATP = O-phospho-L-threonyl-[protein] + ADP + H(+). This Caenorhabditis elegans protein is Putative serine/threonine-protein kinase ZK507.1.